Consider the following 205-residue polypeptide: Large ribosomal subunit protein uL4 (205 aa).

The disordered stretch occupies residues 44–77; that stretch reads KRQGTSKVKNRSAVRGGGKKPWRQKGTGRARQGS. Residues 51-71 show a composition bias toward basic residues; sequence VKNRSAVRGGGKKPWRQKGTG.

This sequence belongs to the universal ribosomal protein uL4 family. Part of the 50S ribosomal subunit.

In terms of biological role, one of the primary rRNA binding proteins, this protein initially binds near the 5'-end of the 23S rRNA. It is important during the early stages of 50S assembly. It makes multiple contacts with different domains of the 23S rRNA in the assembled 50S subunit and ribosome. Its function is as follows. Forms part of the polypeptide exit tunnel. The polypeptide is Large ribosomal subunit protein uL4 (Lactobacillus delbrueckii subsp. bulgaricus (strain ATCC 11842 / DSM 20081 / BCRC 10696 / JCM 1002 / NBRC 13953 / NCIMB 11778 / NCTC 12712 / WDCM 00102 / Lb 14)).